The following is a 188-amino-acid chain: dCTP deaminase (188 aa).

DCTP is bound by residues 111–116 (KSTYAR), 135–137 (TLE), Q156, Y170, and Q180. The active-site Proton donor/acceptor is E137.

Belongs to the dCTP deaminase family. In terms of assembly, homotrimer.

The enzyme catalyses dCTP + H2O + H(+) = dUTP + NH4(+). The protein operates within pyrimidine metabolism; dUMP biosynthesis; dUMP from dCTP (dUTP route): step 1/2. Catalyzes the deamination of dCTP to dUTP. The chain is dCTP deaminase from Acidithiobacillus ferrooxidans (strain ATCC 23270 / DSM 14882 / CIP 104768 / NCIMB 8455) (Ferrobacillus ferrooxidans (strain ATCC 23270)).